The following is a 116-amino-acid chain: Small ribosomal subunit protein uS13 (116 aa).

The segment at 88–116 is disordered; that stretch reads GSRHKKGLPVRGQHTKNNARTRKGPRKQA.

It belongs to the universal ribosomal protein uS13 family. In terms of assembly, part of the 30S ribosomal subunit. Forms a loose heterodimer with protein S19. Forms two bridges to the 50S subunit in the 70S ribosome.

Functionally, located at the top of the head of the 30S subunit, it contacts several helices of the 16S rRNA. In the 70S ribosome it contacts the 23S rRNA (bridge B1a) and protein L5 of the 50S subunit (bridge B1b), connecting the 2 subunits; these bridges are implicated in subunit movement. Contacts the tRNAs in the A and P-sites. This is Small ribosomal subunit protein uS13 from Finegoldia magna (strain ATCC 29328 / DSM 20472 / WAL 2508) (Peptostreptococcus magnus).